The sequence spans 272 residues: Formamidopyrimidine-DNA glycosylase (272 aa).

P2 (schiff-base intermediate with DNA) is an active-site residue. The active-site Proton donor is the E3. The Proton donor; for beta-elimination activity role is filled by K58. Positions 92, 111, and 153 each coordinate DNA. The segment at 238-272 (AVYGRQGQSCPRCGGLVERCRLGQRSTFFCPACQR) adopts an FPG-type zinc-finger fold. R262 (proton donor; for delta-elimination activity) is an active-site residue.

The protein belongs to the FPG family. In terms of assembly, monomer. Requires Zn(2+) as cofactor.

The catalysed reaction is Hydrolysis of DNA containing ring-opened 7-methylguanine residues, releasing 2,6-diamino-4-hydroxy-5-(N-methyl)formamidopyrimidine.. It catalyses the reaction 2'-deoxyribonucleotide-(2'-deoxyribose 5'-phosphate)-2'-deoxyribonucleotide-DNA = a 3'-end 2'-deoxyribonucleotide-(2,3-dehydro-2,3-deoxyribose 5'-phosphate)-DNA + a 5'-end 5'-phospho-2'-deoxyribonucleoside-DNA + H(+). Functionally, involved in base excision repair of DNA damaged by oxidation or by mutagenic agents. Acts as a DNA glycosylase that recognizes and removes damaged bases. Has a preference for oxidized purines, such as 7,8-dihydro-8-oxoguanine (8-oxoG). Has AP (apurinic/apyrimidinic) lyase activity and introduces nicks in the DNA strand. Cleaves the DNA backbone by beta-delta elimination to generate a single-strand break at the site of the removed base with both 3'- and 5'-phosphates. This chain is Formamidopyrimidine-DNA glycosylase, found in Laribacter hongkongensis (strain HLHK9).